The primary structure comprises 1036 residues: Chitin synthase 1 (1036 aa).

A compositionally biased stretch (pro residues) spans 1 to 10 (MDGPPSPTRV). Positions 1-153 (MDGPPSPTRV…RRPLPPAPLF (153 aa)) are disordered. An N-linked (GlcNAc...) asparagine glycan is attached at asparagine 38. Low complexity predominate over residues 86-108 (PSIPLSSSNPRSPIRPSTPSRVS). An N-linked (GlcNAc...) asparagine glycan is attached at asparagine 179. The segment at 189 to 229 (RASLKSAHSYTTDSTFTEDDDITNEKLNHYGPAPEGRQDRR) is disordered. Positions 194 to 203 (SAHSYTTDST) are enriched in polar residues. The next 7 membrane-spanning stretches (helical) occupy residues 659 to 679 (FISL…FYFV), 699 to 719 (IFVI…ILSL), 733 to 753 (TMVT…YIVI), 776 to 796 (IFTN…LMSF), 808 to 828 (SAQY…YAFC), 908 to 928 (YVVA…SEAY), and 945 to 967 (WSVA…INIV). The tract at residues 994–1019 (AGLGSGFSESGKTGITSGSGMSGMSL) is disordered. The span at 1001-1019 (SESGKTGITSGSGMSGMSL) shows a compositional bias: low complexity.

It belongs to the chitin synthase family. Class II subfamily.

It is found in the cell membrane. It carries out the reaction [(1-&gt;4)-N-acetyl-beta-D-glucosaminyl](n) + UDP-N-acetyl-alpha-D-glucosamine = [(1-&gt;4)-N-acetyl-beta-D-glucosaminyl](n+1) + UDP + H(+). Its function is as follows. Polymerizes chitin, a structural polymer of the cell wall and septum, by transferring the sugar moiety of UDP-GlcNAc to the non-reducing end of the growing chitin polymer. CHS1 mainly responsible for normal yeast cell reproductive growth. This chain is Chitin synthase 1, found in Exophiala dermatitidis (strain ATCC 34100 / CBS 525.76 / NIH/UT8656) (Black yeast).